A 709-amino-acid polypeptide reads, in one-letter code: ATP-binding cassette sub-family F member 3 (709 aa).

Ala-2 is modified (N-acetylalanine). Phosphoserine is present on Ser-83. The span at 129 to 143 (RLKAKQEKRSEKETL) shows a compositional bias: basic and acidic residues. Residues 129 to 171 (RLKAKQEKRSEKETLKTSNPLVLEEASASQAGSRKESRLESSG) are disordered. 3 positions are modified to phosphoserine: Ser-155, Ser-157, and Ser-161. The span at 161–171 (SRKESRLESSG) shows a compositional bias: basic and acidic residues. 2 consecutive ABC transporter domains span residues 178–424 (VRIE…LNQQ) and 492–707 (LQLD…RREG). Residue 210–217 (GRNGLGKT) coordinates ATP. A Phosphoserine modification is found at Ser-283. 525-532 (GENGAGKS) is a binding site for ATP.

This sequence belongs to the ABC transporter superfamily. ABCF family. EF3 subfamily.

Its function is as follows. Displays an antiviral effect against flaviviruses such as west Nile virus (WNV) in the presence of OAS1B. The protein is ATP-binding cassette sub-family F member 3 (Abcf3) of Mus musculus (Mouse).